The sequence spans 515 residues: Integrator complex subunit 14 (515 aa).

One can recognise a VWFA domain in the interval 2 to 204; the sequence is PTVVVMDVSL…KNVQSMFGKL (203 aa). Ser-10, Ser-12, and Thr-86 together coordinate Mg(2+). At Lys-418 the chain carries N6-acetyllysine.

The protein belongs to the Integrator subunit 14 family. As to quaternary structure, component of the Integrator complex, composed of core subunits INTS1, INTS2, INTS3, INTS4, INTS5, INTS6, INTS7, INTS8, INTS9/RC74, INTS10, INTS11/CPSF3L, INTS12, INTS13, INTS14 and INTS15. The core complex associates with protein phosphatase 2A subunits PPP2CA and PPP2R1A, to form the Integrator-PP2A (INTAC) complex. INTS14 is part of the tail subcomplex, composed of INTS10, INTS13, INTS14 and INTS15.

Its subcellular location is the nucleus. Its function is as follows. Component of the integrator complex, a multiprotein complex that terminates RNA polymerase II (Pol II) transcription in the promoter-proximal region of genes. The integrator complex provides a quality checkpoint during transcription elongation by driving premature transcription termination of transcripts that are unfavorably configured for transcriptional elongation: the complex terminates transcription by (1) catalyzing dephosphorylation of the C-terminal domain (CTD) of Pol II subunit POLR2A/RPB1 and SUPT5H/SPT5, (2) degrading the exiting nascent RNA transcript via endonuclease activity and (3) promoting the release of Pol II from bound DNA. The integrator complex is also involved in terminating the synthesis of non-coding Pol II transcripts, such as enhancer RNAs (eRNAs), small nuclear RNAs (snRNAs), telomerase RNAs and long non-coding RNAs (lncRNAs). Within the integrator complex, INTS14 is part of the integrator tail module that acts as a platform for the recruitment of transcription factors at promoters. This chain is Integrator complex subunit 14, found in Mus musculus (Mouse).